We begin with the raw amino-acid sequence, 396 residues long: S-adenosylmethionine synthase (396 aa).

Residue histidine 16 participates in ATP binding. Residue aspartate 18 participates in Mg(2+) binding. Glutamate 44 provides a ligand contact to K(+). 2 residues coordinate L-methionine: glutamate 57 and glutamine 100. Residues glutamine 100–glutamate 110 are flexible loop. Residues aspartate 175–lysine 177, arginine 242–phenylalanine 243, aspartate 251, arginine 257–lysine 258, alanine 274, and lysine 278 each bind ATP. Aspartate 251 is an L-methionine binding site. L-methionine is bound at residue lysine 282.

It belongs to the AdoMet synthase family. As to quaternary structure, homotetramer; dimer of dimers. Mg(2+) serves as cofactor. Requires K(+) as cofactor.

It is found in the cytoplasm. The enzyme catalyses L-methionine + ATP + H2O = S-adenosyl-L-methionine + phosphate + diphosphate. The protein operates within amino-acid biosynthesis; S-adenosyl-L-methionine biosynthesis; S-adenosyl-L-methionine from L-methionine: step 1/1. Catalyzes the formation of S-adenosylmethionine (AdoMet) from methionine and ATP. The overall synthetic reaction is composed of two sequential steps, AdoMet formation and the subsequent tripolyphosphate hydrolysis which occurs prior to release of AdoMet from the enzyme. The chain is S-adenosylmethionine synthase from Streptococcus suis (strain 05ZYH33).